A 212-amino-acid chain; its full sequence is Phosphoribosylglycinamide formyltransferase (212 aa).

Residue 11-13 (GSN) participates in N(1)-(5-phospho-beta-D-ribosyl)glycinamide binding. (6R)-10-formyltetrahydrofolate is bound by residues Arg64, 89–92 (MRIL), and Asn106. The active-site Proton donor is the His108. 140–144 (TDELD) lines the (6R)-10-formyltetrahydrofolate pocket. 170–173 (QTQE) lines the N(1)-(5-phospho-beta-D-ribosyl)glycinamide pocket.

This sequence belongs to the GART family. As to quaternary structure, monomer. Homodimer below pH 6.8.

The enzyme catalyses N(1)-(5-phospho-beta-D-ribosyl)glycinamide + (6R)-10-formyltetrahydrofolate = N(2)-formyl-N(1)-(5-phospho-beta-D-ribosyl)glycinamide + (6S)-5,6,7,8-tetrahydrofolate + H(+). The protein operates within purine metabolism; IMP biosynthesis via de novo pathway; N(2)-formyl-N(1)-(5-phospho-D-ribosyl)glycinamide from N(1)-(5-phospho-D-ribosyl)glycinamide (10-formyl THF route): step 1/1. Its activity is regulated as follows. Inhibited by N10-(bromoacetyl)-5,8-dideazafolate. In terms of biological role, catalyzes the transfer of a formyl group from 10-formyltetrahydrofolate to 5-phospho-ribosyl-glycinamide (GAR), producing 5-phospho-ribosyl-N-formylglycinamide (FGAR) and tetrahydrofolate. The sequence is that of Phosphoribosylglycinamide formyltransferase from Escherichia coli (strain K12).